Here is a 1182-residue protein sequence, read N- to C-terminus: Phosphatidylinositol 3-kinase age-1 (1182 aa).

Residues 1–16 show a composition bias toward polar residues; sequence MSMGRSPSTTFRSRTG. The disordered stretch occupies residues 1-24; sequence MSMGRSPSTTFRSRTGSHGARDLI. One can recognise a PI3K-ABD domain in the interval 74-174; it reads NEGVADIITM…FPMLFLYQPD (101 aa). The 93-residue stretch at 266 to 358 folds into the PI3K-RBD domain; that stretch reads KRKAEINGVC…YRCPGFVVRR (93 aa). The C2 PI3K-type domain occupies 425 to 577; the sequence is LDANLMIRPV…SSYGGRVRMP (153 aa). The 188-residue stretch at 601-788 folds into the PIK helical domain; it reads DDYESCIRDP…SLLMEAYLRG (188 aa). The PI3K/PI4K catalytic domain maps to 853-1168; sequence IIDKAIVLGS…IYEEAFNGSW (316 aa). A G-loop region spans residues 859-865; that stretch reads VLGSAKR. Residues 1028–1036 are catalytic loop; it reads GIKDRHSDN. The tract at residues 1047–1073 is activation loop; that stretch reads HIDFGHILGHGKTKLGIQRDRQPFILT.

The protein belongs to the PI3/PI4-kinase family.

It carries out the reaction a 1,2-diacyl-sn-glycero-3-phospho-(1D-myo-inositol) + ATP = a 1,2-diacyl-sn-glycero-3-phospho-(1D-myo-inositol-3-phosphate) + ADP + H(+). Functionally, phosphatidylinositol 3-kinase homolog that regulates longevity and diapause. Promotes cell survival during embryonic development by recruiting akt-1/2 to the plasma membrane through the production of PtdIns(3,4,5)P3. Could function in the development or neuroendocrine signaling of the dauer pathway. Mediates susceptibility to enteropathogenic E.coli infection. May negatively regulate AYI interneuron neurite outgrowth. Plays a role in aversive olfactory learning when an odor is associated with food deprivation. Regulates this process by promoting the nuclear relocalization of egl-4 in AWC olfactory neurons after odor conditioning. This chain is Phosphatidylinositol 3-kinase age-1, found in Caenorhabditis elegans.